The sequence spans 122 residues: Defensin-like protein 181 (122 aa).

A signal peptide spans 1–26 (MERIPSLASLVSLLIIFATVVNQTRA). Disulfide bonds link cysteine 29–cysteine 70, cysteine 36–cysteine 55, cysteine 39–cysteine 64, cysteine 43–cysteine 66, cysteine 76–cysteine 122, cysteine 87–cysteine 107, cysteine 92–cysteine 116, and cysteine 96–cysteine 118.

The protein belongs to the DEFL family.

Its subcellular location is the secreted. In terms of biological role, confers broad-spectrum resistance to pathogens. This Arabidopsis thaliana (Mouse-ear cress) protein is Defensin-like protein 181 (PDF3.1).